A 414-amino-acid polypeptide reads, in one-letter code: MKFVVASYGTRGDIEPCAAVGLELQRRGHDVCLAVPPNLIGFVETAGLSAVAYGSRDSQEQLDEQFLHNAWKLQNPIKLLREAMAPVTEGWAELSAMLTPVAAGADLLLTGQIYQEVVANVAEHHGIPLAALHFYPVRANGEIAFPARLPAPLVRSTITAIDWLYWRMTKGVEDAQRRELGLPKASTPAPRRMAVRGSLEIQAYDALCFPGLAAEWGGRRPFVGALTMESATDADDEVASWIAADTPPIYFGFGSMPIGSLADRVAMISAACAELGERALICSGPSDATGIPQFDHVKVVRVVSHAAVFPTCRAVVHHGGAGTTAAGLRAGIPTLILWVTSDQPIWAAQIKQLKVGRGRRFSSATKESLIADLRTILAPDYVTRAREIASRMTKPAASVTATADLLEDAARRAR.

It belongs to the glycosyltransferase 28 family.

This is an uncharacterized protein from Mycobacterium tuberculosis (strain CDC 1551 / Oshkosh).